A 190-amino-acid polypeptide reads, in one-letter code: Elongation factor P-like protein (190 aa).

It belongs to the elongation factor P family.

This chain is Elongation factor P-like protein, found in Photorhabdus laumondii subsp. laumondii (strain DSM 15139 / CIP 105565 / TT01) (Photorhabdus luminescens subsp. laumondii).